We begin with the raw amino-acid sequence, 620 residues long: Probable potassium transport system protein Kup 1 (620 aa).

12 consecutive transmembrane segments (helical) span residues 7-27 (GIGL…TSPL), 50-70 (VLSL…VIVI), 102-122 (MMLG…TPAI), 136-156 (PDLK…LFAI), 168-188 (FGPV…ANIV), 211-231 (LMSF…EALY), 246-266 (WFGL…ALLI), 284-304 (MVVP…QAVI), 336-356 (IYVP…VVGF), 368-388 (IAVT…AALL), 393-413 (PVVV…FFAA), and 415-435 (IIKV…SFTV).

It belongs to the HAK/KUP transporter (TC 2.A.72) family.

It is found in the cell inner membrane. It carries out the reaction K(+)(in) + H(+)(in) = K(+)(out) + H(+)(out). Its function is as follows. Transport of potassium into the cell. Likely operates as a K(+):H(+) symporter. The polypeptide is Probable potassium transport system protein Kup 1 (Rhodopseudomonas palustris (strain ATCC BAA-98 / CGA009)).